The sequence spans 255 residues: Pyrroloquinoline-quinone synthase (255 aa).

The protein belongs to the PqqC family.

It catalyses the reaction 6-(2-amino-2-carboxyethyl)-7,8-dioxo-1,2,3,4,7,8-hexahydroquinoline-2,4-dicarboxylate + 3 O2 = pyrroloquinoline quinone + 2 H2O2 + 2 H2O + H(+). Its pathway is cofactor biosynthesis; pyrroloquinoline quinone biosynthesis. Functionally, ring cyclization and eight-electron oxidation of 3a-(2-amino-2-carboxyethyl)-4,5-dioxo-4,5,6,7,8,9-hexahydroquinoline-7,9-dicarboxylic-acid to PQQ. The polypeptide is Pyrroloquinoline-quinone synthase (Cereibacter sphaeroides (strain ATCC 17025 / ATH 2.4.3) (Rhodobacter sphaeroides)).